The chain runs to 2273 residues: KGKTITHGQSWGARRIHSHFYITIFTITCIRIGQYKLALYLDPYRFYNITGSQIVRLKGQRPEYRKRIFAHSYRHSSRIGLNFPSRRRYSNYVDRGNIHKHTRLPPQFIGLNTVESAQPSILRDFVDLRGGHTVISKILIANNGIAAVKEMRSIRKWAYETFNDEKIIQFVVMATPDDLHANSEYIRMADQYVQVPGGTNNNNYANIDLILDVAEQTDVDAVWAGWGHASENPCLPELLASSQRKILFIGPPGRAMRSLGDKISSTIVAQSAKIPCIPWSGSHIDTIHIDNKTNFVSVPDDVYVRGCCSSPEDALEKAKLIGFPVMIKASEGGGGKGIRRVDNQDDFIALYRQAVNETPGSPMFVMKVVTDARHLEVQLLADQYGTNITLFGRDCSIQRRHQKIIEEAPVTITKPETFQRMERAAIRLGELVGYVSAGTVEYLYSPKDDKFYFLELNPRLQVEHPTTEMISGVNLPATQLQIAMGIPMHMISDIRKLYGLDPTGTSYIDFKNLKRPSPKGHCISCRITSEDPNEGFKPSTGKIHELNFRSSSNVWGYFSVGNNGAIHSFSDSQFGHIFAVGNDRQDAKQNMVLALKDFSIRGEFKTPIEYLIELLETRDFESNNISTGWLDDLILKNLSSDSKLDPTLAIICGAAMKAYVFTEKVRNKYLELLRRGQVPPKDFLKTKFPVDFIFDNNRYLFNVAQSSEEQFILSINKSQCEVNVQKLSSDCLLISVDGKCHTVYWKDDIRGTRLSIDSNTIFLEAELNPTQVISPTPGKLVKYLVRSGDHVFAGQQYAEIEIMKMQMPLVAKSDGVIELLRQPGSIIEAGDVIAKLTLDSPSKANESSLYRGELPVLGPPLIEGSRPNHKLRVLINRLENILNGYHENSGIETTLKELIKILRDGRLPYSEWDSQISTVRNRLPRQLNEGLGNLVKKSVSFPAKELHKLMKRYLEENTNDHVVYVALQPLLKISERYSEGLANHECEIFLKLIKKYYAVEKIFENHDIHEERNLLNLRRKDLTNLKEILCISLSHANIVAKNKLVTAILHEYEPLCQDSSKMSLKFRAVIHDLASLESKWAKEVSVKARSVLLRGIFPPIKKRKEHIKTLLQLHIKDTGAENIHSRNIYSCMRDFGNLIHSNLIQLQDLFFFFGHQDTALSSIASEIYARYAYGNYQLKSIKIHKGAPDLLMSWQFSSLRNYLVNPDGESDGFTKLSKPPSTSGKSSANSFGLLVNMRALESLEKTLDEVYEQIHIPEERLSSGENSLIVNILSPIRYRSENDLIKTLKIKLHENERGLSKLKVNRITFAFIAANAPAVKFYSFDGTTYDEIPQIRNMDPSYEAPLELGKMSNYKIRSLPTYDSSIRIFEGISKFTPLDKRFFVRKIINSFMYNDQKTTEENLKAEINAQVVYMLEHLGAVDISNSDLNHIFLSFNTVLNIPVHRLEEIVSTILKTHETRLFQERITDVEICISVECLETKKPAPLRLLISNKSGYVVKIETYYEKIGKNGNLILEPCSEQSHYSQKSLSLPYSVKDWLQPKRYKAQFMGTTYVYDFPGLFHQAAIQQWKRYFPKHKLNDSFFSWVELIEQNGNLIKVNREPGLNNIGMVAFEIMVQTPEYPEGRNMIVISNDITYNIGSFGPREDLFFDRVTNYARERGIPRIYLAANSGAKLGIAEELIPLFRVAWNDPSDPTKGFQYLYLAPKDMQLLKDSGKGNSVVVEHKMVYGEERYIIKAIVGFEEGLGVECLQGSGLIAGATSKAYRDIFTITAVTCRSVGIGSYLVRLGQRTIQVEDKPIILTGASAINKVLGTDIYTSNLQIGGTQIMYKNGIAHLTASNDMKAIEKIMTWLSYVPAKRDMSPPLLETMDRWDRDVDFKPAKQVPYEARWLIEGKWDSNNNFQSGLFDKDSFFETLSGWAKGVIVGRARLGGIPVGVIAVETKTIEEIIPADPANLDSSEFSVKEAGQVWYPNSAFKTAQTINDFNYGEQLPLIILANWRGFSGGQRDMYNEVLKYGSFIVDALVDYKQPILIYIPPFGELRGGSWVVIDPTINPEQMEMYADVESRGGVLEPDGVVSIKYRKEKMIETMIRLDSTYGHLRRTLTEKKLSLEKQNDLTKRLKIRERQLIPIYNQISIQFADLHDRSTRMLVKGVIRNELEWKKSRRFLYWRLRRRLNEGQVIKRLQKKTCDNKTKMKYDDLLKIVQSWYNDLDVNDDRAVVEFIERNSKKIGKNVEEFEISLLIDELKKKFEDRRGNIALEELTRLVDSKRKR.

A mitochondrion-targeting transit peptide spans K1–L104. Positions V134 to L635 constitute a Biotin carboxylation domain. The region spanning K292 to M484 is the ATP-grasp domain. ATP is bound at residue G332–G337. Residue R459 is part of the active site. The Biotinyl-binding domain maps to L763–T837. Position 804 is an N6-biotinyllysine (K804). One can recognise a CoA carboxyltransferase N-terminal domain in the interval P1532–E1867. Residues P1532–K2187 form a carboxyltransferase region. CoA is bound by residues R1776, K2080, and R2082. The 317-residue stretch at R1871–K2187 folds into the CoA carboxyltransferase C-terminal domain.

Biotin is required as a cofactor.

Its subcellular location is the mitochondrion. It carries out the reaction hydrogencarbonate + acetyl-CoA + ATP = malonyl-CoA + ADP + phosphate + H(+). The catalysed reaction is N(6)-biotinyl-L-lysyl-[protein] + hydrogencarbonate + ATP = N(6)-carboxybiotinyl-L-lysyl-[protein] + ADP + phosphate + H(+). The protein operates within lipid metabolism; malonyl-CoA biosynthesis; malonyl-CoA from acetyl-CoA: step 1/1. Catalyzes the rate-limiting reaction in the mitochondrial fatty acid synthesis (FAS) type II pathway. Responsible for the production of the mitochondrial malonyl-CoA, used for the biosynthesis of the cofactor lipoic acid. This protein carries three functions: biotin carboxyl carrier protein, biotin carboxylase, and carboxyltransferase. This is Acetyl-CoA carboxylase, mitochondrial (HFA1) from Saccharomyces cerevisiae (strain JAY291) (Baker's yeast).